Here is a 146-residue protein sequence, read N- to C-terminus: Large ribosomal subunit protein uL15 (146 aa).

Positions 1–13 are enriched in basic and acidic residues; it reads MKLHELKPAEGSR. Residues 1 to 65 form a disordered region; that stretch reads MKLHELKPAE…PLYRRLPKRG (65 aa). 2 stretches are compositionally biased toward gly residues: residues 21–31 and 42–52; these read RGIGSGNGKTA and SGGGVRPGFEG.

Belongs to the universal ribosomal protein uL15 family. Part of the 50S ribosomal subunit.

Its function is as follows. Binds to the 23S rRNA. The protein is Large ribosomal subunit protein uL15 of Halalkalibacterium halodurans (strain ATCC BAA-125 / DSM 18197 / FERM 7344 / JCM 9153 / C-125) (Bacillus halodurans).